A 417-amino-acid chain; its full sequence is Sulfate adenylyltransferase (417 aa).

The span at Met-1–Pro-10 shows a compositional bias: polar residues. Residues Met-1–Pro-20 form a disordered region.

This sequence belongs to the sulfate adenylyltransferase family.

It carries out the reaction sulfate + ATP + H(+) = adenosine 5'-phosphosulfate + diphosphate. It participates in sulfur metabolism; hydrogen sulfide biosynthesis; sulfite from sulfate: step 1/3. In Psychrobacter arcticus (strain DSM 17307 / VKM B-2377 / 273-4), this protein is Sulfate adenylyltransferase.